The following is a 240-amino-acid chain: MTMPFGYASPEQQVRDKSEYARKGIARGRSVVVLTYENGILFVAENPSATLHKISEIYDRIAFAAVGKYNEFENLRTAGIRLMDSRGYMYDRRDVTSRALANAYAQTLGAIFSESVKPYEVEIVVAEVGTSIADDQIYRLTYDGSIADERGFVAIGGASEQVTTSLKEHHRDGQPLAEALRVAVQALTVGVPPGLPQNGERVLAAANLEVGMLDRTRTRRMFKRIVGPALEGLLAQTSAT.

Belongs to the peptidase T1A family. The 20S proteasome core is composed of 14 alpha and 14 beta subunits that assemble into four stacked heptameric rings, resulting in a barrel-shaped structure. The two inner rings, each composed of seven catalytic beta subunits, are sandwiched by two outer rings, each composed of seven alpha subunits. The catalytic chamber with the active sites is on the inside of the barrel. Has a gated structure, the ends of the cylinder being occluded by the N-termini of the alpha-subunits. Is capped by the proteasome-associated ATPase, ARC.

It is found in the cytoplasm. It functions in the pathway protein degradation; proteasomal Pup-dependent pathway. Its activity is regulated as follows. The formation of the proteasomal ATPase ARC-20S proteasome complex, likely via the docking of the C-termini of ARC into the intersubunit pockets in the alpha-rings, may trigger opening of the gate for substrate entry. Interconversion between the open-gate and close-gate conformations leads to a dynamic regulation of the 20S proteasome proteolysis activity. Its function is as follows. Component of the proteasome core, a large protease complex with broad specificity involved in protein degradation. The protein is Proteasome subunit alpha of Frankia casuarinae (strain DSM 45818 / CECT 9043 / HFP020203 / CcI3).